The sequence spans 464 residues: Soluble pyridine nucleotide transhydrogenase (464 aa).

Residue 35-44 (DDRRQVGGNC) coordinates FAD.

It belongs to the class-I pyridine nucleotide-disulfide oxidoreductase family. FAD serves as cofactor.

It is found in the cytoplasm. The catalysed reaction is NAD(+) + NADPH = NADH + NADP(+). Its function is as follows. Conversion of NADPH, generated by peripheral catabolic pathways, to NADH, which can enter the respiratory chain for energy generation. The chain is Soluble pyridine nucleotide transhydrogenase from Pseudomonas putida (strain GB-1).